The following is a 184-amino-acid chain: UPF0316 protein BLi00691/BL01474 (184 aa).

3 helical membrane-spanning segments follow: residues 9-29, 41-61, and 67-87; these read GVIMVGIILVINIIYVTFLTL, LAAFIGTIEMLVYVVGLGLVL, and IQNVIAYAVGFGIGIIVGTKI.

Belongs to the UPF0316 family.

The protein resides in the cell membrane. The protein is UPF0316 protein BLi00691/BL01474 of Bacillus licheniformis (strain ATCC 14580 / DSM 13 / JCM 2505 / CCUG 7422 / NBRC 12200 / NCIMB 9375 / NCTC 10341 / NRRL NRS-1264 / Gibson 46).